A 194-amino-acid chain; its full sequence is Accessory gene regulator protein B (194 aa).

5 helical membrane-spanning segments follow: residues 44 to 64 (IVVY…LTHL), 80 to 100 (SSLL…YLII), 107 to 127 (FVLL…APAA), 142 to 162 (KILS…TKEP), and 163 to 183 (VNKL…PIFF).

This sequence belongs to the AgrB family.

It localises to the cell membrane. Essential for the production of a quorum sensing system signal molecule, the autoinducing peptide (AIP). This quorum sensing system is responsible for the regulation of the expression of virulence factor genes. Involved in the proteolytic processing of AgrD, the precursor of AIP. The protein is Accessory gene regulator protein B of Staphylococcus epidermidis.